Here is a 238-residue protein sequence, read N- to C-terminus: MSSPDQNPSDAAGQTGSSNEEVVDVRRGMFGVKGTGDTSGYGRLVREIVLPGSSPRPYGFYFDEIADRLAEALNRDGVEFEDAIEKVVVYRNELTLHVRREALLRVAQSLRDEPELRFELCLGVNGVHYPHETGRELHAVYPLQSITHNRRLRLEVSAPDSDPHIPSLYAVYPTNDWHERETYDFFGIIFDGHPSLTRIEMPDDWQGHPQRKDYPLGGIPVEYKGAQIPPPDERRGYN.

Residues 1–20 (MSSPDQNPSDAAGQTGSSNE) form a disordered region.

The protein belongs to the complex I 30 kDa subunit family. As to quaternary structure, NDH-1 is composed of 14 different subunits. Subunits NuoB, C, D, E, F, and G constitute the peripheral sector of the complex.

It localises to the cell membrane. The catalysed reaction is a quinone + NADH + 5 H(+)(in) = a quinol + NAD(+) + 4 H(+)(out). Its function is as follows. NDH-1 shuttles electrons from NADH, via FMN and iron-sulfur (Fe-S) centers, to quinones in the respiratory chain. The immediate electron acceptor for the enzyme in this species is believed to be a menaquinone. Couples the redox reaction to proton translocation (for every two electrons transferred, four hydrogen ions are translocated across the cytoplasmic membrane), and thus conserves the redox energy in a proton gradient. In Mycobacterium marinum (strain ATCC BAA-535 / M), this protein is NADH-quinone oxidoreductase subunit C.